We begin with the raw amino-acid sequence, 2346 residues long: Nucleoprotein TPR (2346 aa).

Coiled coils occupy residues 38–190 (DEYC…HKEI), 217–366 (QLQS…NLES), 395–493 (YAKS…SRQV), and 565–596 (KMLL…NNTV). The segment at 622–649 (VDLDDSNLEPNDSALDTSEQPAANFEES) is disordered. A compositionally biased stretch (polar residues) spans 629 to 642 (LEPNDSALDTSEQP). Coiled-coil stretches lie at residues 643–1158 (AANF…IEAL) and 1196–1247 (EEGR…DELN). Residues 1187-1655 (LNASGLTAAE…SPRTANVKPM (469 aa)) are interacts with Mad1. T1259, T1302, T1338, and T1390 each carry phosphothreonine. Coiled coils occupy residues 1281–1536 (TDSN…KRTE) and 1579–1627 (SYDE…GSQQ). 2 stretches are compositionally biased toward polar residues: residues 1621-1649 (RQLG…SPRT) and 1657-1667 (GSATVQQSATV). Disordered regions lie at residues 1621–1677 (RQLG…ETPL), 1695–1768 (PTSQ…YMPS), and 1821–2346 (SPRV…GRFP). The segment covering 1702-1722 (AGSSTSTSSSSSSSSTSTTSA) has biased composition (low complexity). Residues 1738–1747 (PQQQVHTTGS) show a composition bias toward polar residues. Low complexity-rich tracts occupy residues 1752-1761 (SMASSSPTSS) and 1827-1878 (SSSS…PSSS). Residues 1879–1891 (NVTTTQAGCSSQG) show a composition bias toward polar residues. Acidic residues predominate over residues 1953–2023 (QEDDIQVVDS…QDNNEVDIEV (71 aa)). Residues 2028-2080 (MQAQEESQSLDNQAIATASASTQENNQSQAITSGSGESSNPVTLPQAEASNWK) show a composition bias toward polar residues. The segment covering 2082-2091 (AAASTSTAAA) has biased composition (low complexity). Polar residues-rich tracts occupy residues 2097-2110 (SVEI…SNFC) and 2142-2159 (GAAS…GESS). Residues 2165–2184 (KAADDGGDHADGTDNAREAD) show a composition bias toward basic and acidic residues. Composition is skewed to polar residues over residues 2193 to 2223 (ATGQ…NQAN) and 2302 to 2322 (RDTS…NRFA). Basic residues predominate over residues 2323–2332 (QRTRNRRPIR).

The protein belongs to the TPR family. As to quaternary structure, part of the nuclear pore complex (NPC). Associates with male-specific lethal (MSL) histone acetyltransferase complex. Interacts with Mad2; the interaction is required for efficient recruitment of Mad2 to unattached kinetochore and occurs in a microtubule-independent manner. Interacts with Mad1 (N-terminus). Interacts with Chro, east and Asator; the interaction is part of a macromolecular complex forming the spindle matrix during mitosis. Interacts with Nup98. In males, interacts with histone acetyltransferase mof. Mps1-mediated phosphorylation disrupts interaction with Mad1 during mitosis. In terms of tissue distribution, expressed in salivary glands, fat body, tracheal tube, esophageal tube and anterior ejaculatory duct (at protein level).

The protein localises to the nucleus. It is found in the nucleus matrix. Its subcellular location is the nucleus lamina. It localises to the nucleus envelope. The protein resides in the nucleus membrane. The protein localises to the nuclear pore complex. It is found in the cytoplasm. Its subcellular location is the cytoskeleton. It localises to the spindle. The protein resides in the chromosome. The protein localises to the centromere. It is found in the kinetochore. Its subcellular location is the midbody. Its function is as follows. Component of the nuclear pore complex (NPC), a complex required for the trafficking across the nuclear envelope. Functions as a scaffolding element in the nuclear phase of the NPC. Plays a role in chromosomal organization and gene expression regulation; stimulates transcription by promoting the formation of an open chromatin environment. Binds chromatin to nucleoporin-associated regions (NARs) that define transcriptionally active regions of the genome. Associates with extended chromosomal regions that alternate between domains of high density binding with those of low occupancy. Preferentially binds to NARs of the male X chromosome. In males, together with Nup153, required for the localization of the male-specific lethal (MSL) histone acetyltransferase complex to the X chromosome and therefore for the transcription of dosage compensation genes. In males, restrains dosage-compensated expression at the level of nascent transcription probably by interacting with the MSL complex and by modulating RNA Polymerase II phosphorylation status and activity. During mitosis forms a gel-like spindle matrix complex together with Skeletor (Skel), Chro, east, and Asator embedding the microtubule spindle apparatus. During interphase localizes Mad1 to the nuclear pore complex and thereby might act as a scaffold to assemble the Mad1-C-Mad2 complex, a heterotetramer that catalyzes the structural conversion of open-Mad2 (O-Mad2) into closed-Mad2 (C-Mad2) which is essential for spindle-assembly checkpoint (SAC). During the metaphase-anaphase transition and before chromosome congression, is phosphorylated by Msp-1; this modification releases Mad1 from the nuclear pore complex and thereby promotes assembly of SAC ensuring a timely and effective recruitment of spindle checkpoint proteins like Mad1, Mad2 and Mps1 to unattached kinetochores (KT). In testes, has a role in stem cell asymmetric division and maintenance via regulation of mitotic spindle assembly checkpoint (SAC) complex. In Drosophila melanogaster (Fruit fly), this protein is Nucleoprotein TPR.